The sequence spans 141 residues: KETAAAKFRRQHMDSGSSSSSNSNYCNQMMKRRRMTHGRCKPVNTFVHESLADVKAVCSQKNITCKNGQPNCYQSNSTMNITDCRETGSSKYPNCAYKTSQKQKYITVACEGNPYVPVHFDGSVLLPATSTQAQAPLARGQ.

The segment at 1-25 (KETAAAKFRRQHMDSGSSSSSNSNY) is disordered. Residues Lys-7 and Arg-10 each contribute to the substrate site. Catalysis depends on His-12, which acts as the Proton acceptor. Positions 15 to 24 (SGSSSSSNSN) are enriched in low complexity. 4 disulfides stabilise this stretch: Cys-26–Cys-84, Cys-40–Cys-95, Cys-58–Cys-110, and Cys-65–Cys-72. Residue 41–45 (KPVNT) coordinates substrate. An N-linked (GlcNAc...) asparagine glycan is attached at Asn-62. Positions 66 and 85 each coordinate substrate. The active-site Proton donor is His-119. Thr-129 is a glycosylation site (O-linked (GalNAc...) threonine).

This sequence belongs to the pancreatic ribonuclease family.

Its subcellular location is the secreted. This is Brain ribonuclease (BRN) from Giraffa camelopardalis (Giraffe).